A 165-amino-acid chain; its full sequence is Inorganic pyrophosphatase (165 aa).

Positions 21, 35, and 47 each coordinate substrate. 3 residues coordinate Mg(2+): aspartate 57, aspartate 62, and aspartate 94. Tyrosine 131 lines the substrate pocket.

This sequence belongs to the PPase family. In terms of assembly, homohexamer. Requires Mg(2+) as cofactor.

Its subcellular location is the cytoplasm. It catalyses the reaction diphosphate + H2O = 2 phosphate + H(+). Functionally, catalyzes the hydrolysis of inorganic pyrophosphate (PPi) forming two phosphate ions. This chain is Inorganic pyrophosphatase, found in Geobacillus stearothermophilus (Bacillus stearothermophilus).